A 134-amino-acid chain; its full sequence is Neuropeptide-like peptide 11 (134 aa).

Positions 1 to 20 (MMSTLALVSLAIFGIAVVCA) are cleaved as a signal peptide. Residues 21 to 106 (APKPATVPVA…YNRLIDAGKK (86 aa)) constitute a propeptide that is removed on maturation. At Ala131 the chain carries Alanine amide.

This is Neuropeptide-like peptide 11 (nlp-11) from Caenorhabditis elegans.